The primary structure comprises 366 residues: Alanine racemase (366 aa).

Lys40 (proton acceptor; specific for D-alanine) is an active-site residue. N6-(pyridoxal phosphate)lysine is present on Lys40. A substrate-binding site is contributed by Arg136. Tyr263 acts as the Proton acceptor; specific for L-alanine in catalysis. Position 310 (Met310) interacts with substrate.

Belongs to the alanine racemase family. The cofactor is pyridoxal 5'-phosphate.

It catalyses the reaction L-alanine = D-alanine. Its pathway is amino-acid biosynthesis; D-alanine biosynthesis; D-alanine from L-alanine: step 1/1. Its function is as follows. Catalyzes the interconversion of L-alanine and D-alanine. May also act on other amino acids. The protein is Alanine racemase (alr) of Streptococcus pyogenes serotype M1.